The sequence spans 82 residues: MSAEKKQNLQDTFLNSVRKSKTPLTIFLVNGVKLQGVVSWFDNFCVLLRRDGQSQLVYKHAISTIMPAQPVQLYEPSADADD.

In terms of domain architecture, Sm spans 11–71; that stretch reads DTFLNSVRKS…ISTIMPAQPV (61 aa).

This sequence belongs to the Hfq family. Homohexamer.

Functionally, RNA chaperone that binds small regulatory RNA (sRNAs) and mRNAs to facilitate mRNA translational regulation in response to envelope stress, environmental stress and changes in metabolite concentrations. Also binds with high specificity to tRNAs. This chain is RNA-binding protein Hfq, found in Caulobacter vibrioides (strain ATCC 19089 / CIP 103742 / CB 15) (Caulobacter crescentus).